The sequence spans 601 residues: Elongation factor 4 (601 aa).

The tr-type G domain occupies 6 to 188 (SHIRNFSIIA…QIVHRVPAPE (183 aa)). GTP is bound by residues 18-23 (DHGKST) and 135-138 (NKID).

The protein belongs to the TRAFAC class translation factor GTPase superfamily. Classic translation factor GTPase family. LepA subfamily.

It localises to the cell inner membrane. The catalysed reaction is GTP + H2O = GDP + phosphate + H(+). Required for accurate and efficient protein synthesis under certain stress conditions. May act as a fidelity factor of the translation reaction, by catalyzing a one-codon backward translocation of tRNAs on improperly translocated ribosomes. Back-translocation proceeds from a post-translocation (POST) complex to a pre-translocation (PRE) complex, thus giving elongation factor G a second chance to translocate the tRNAs correctly. Binds to ribosomes in a GTP-dependent manner. The polypeptide is Elongation factor 4 (Anaeromyxobacter sp. (strain K)).